Consider the following 216-residue polypeptide: MELIDLKAEPRKGRGKSAARHLRNNDAVPAVLYGAKMDSMPISVSTLDLTTMVRVHGSSGLFINLAINGDTVPSRTVMLKEIQMDTFDLKYLHVDFQAINVSEKITISVPVEAVGESVGVKAGGMIQLIRRELDIICKPGDMPEVIQIDTTDLEVGDSVHVEEIDLGADVEIPHDVNFTVLTVVPPTSDVEEEEGDEDLEEDVEETAAEEEEGVEE.

The tract at residues 184-216 (VPPTSDVEEEEGDEDLEEDVEETAAEEEEGVEE) is disordered. Acidic residues predominate over residues 189–216 (DVEEEEGDEDLEEDVEETAAEEEEGVEE).

Belongs to the bacterial ribosomal protein bL25 family. CTC subfamily. As to quaternary structure, part of the 50S ribosomal subunit; part of the 5S rRNA/L5/L18/L25 subcomplex. Contacts the 5S rRNA. Binds to the 5S rRNA independently of L5 and L18.

This is one of the proteins that binds to the 5S RNA in the ribosome where it forms part of the central protuberance. The polypeptide is Large ribosomal subunit protein bL25 (Desulforapulum autotrophicum (strain ATCC 43914 / DSM 3382 / VKM B-1955 / HRM2) (Desulfobacterium autotrophicum)).